Here is a 134-residue protein sequence, read N- to C-terminus: DNA-binding protein H-NS, plasmid (134 aa).

The stretch at 23–67 (LEILEELLEKLSVVVEERRQEESSKEAELKARLEKIESLRQLMLE) forms a coiled coil. The tract at residues 77–96 (SSFSAKSGAPKKVREPRPAK) is disordered. The DNA-binding element occupies 112–117 (QGRTPK).

Belongs to the histone-like protein H-NS family. As to quaternary structure, homodimer that oligomerizes on DNA into higher-order complexes that form bridges between disparate regions of DNA compacting it. Interacts with Hha, YdgT and StpA.

The protein resides in the cytoplasm. Its subcellular location is the nucleoid. A DNA-binding protein implicated in transcriptional repression and chromosome organization and compaction. Binds DNA, modifying gene expression, especially non-core genes. Does not regulate the same set of genes as its chromosomal counterpart (tested in S.typhimurium strain SL1344 / SV5015, chromosomal H-NS protein is AC A0A0H3NBY9). Thus it has a not-completely overlapping set of gene targets compared to its chromosomal homolog; many of these target genes are either plasmid-encoded or acquired by horizontally transferred genes (HTG). This protein can function in the absence of H-NS-modulating protein Hha (either chromosomal or plasmid-encoded), although many HTG genes are regulated by an H-NS/Hha complex. Binds nucleation sites in AT-rich DNA and bridges them, forming higher-order nucleoprotein complexes and condensing the chromosome. A subset of genes are repressed by H-NS in association with Hha and/or Cnu (ydgT). The chain is DNA-binding protein H-NS, plasmid (hns) from Salmonella typhi.